Consider the following 310-residue polypeptide: Syntaxin-81 (310 aa).

Residues 1–289 (MSRFRDRTED…QAIQRNSSSR (289 aa)) are Cytoplasmic-facing. Residues 77–114 (RTTEQEKDSIEQEVAAFIKACKEQIDILINSIRNEEAN) adopt a coiled-coil conformation. Residues 290–310 (TFLLLFFFVLTFSVLFLDWYS) form a helical; Anchor for type IV membrane protein membrane-spanning segment.

The protein belongs to the syntaxin family. As to quaternary structure, part of the t-SNARE complex. Interacts with MAG2.

It localises to the membrane. Its function is as follows. Vesicle trafficking protein that functions in the secretory pathway. This chain is Syntaxin-81 (SYP81), found in Arabidopsis thaliana (Mouse-ear cress).